Here is an 84-residue protein sequence, read N- to C-terminus: Putative membrane protein insertion efficiency factor (84 aa).

The interval Trp-63 to Gly-84 is disordered. The span at Asp-75–Gly-84 shows a compositional bias: basic and acidic residues.

It belongs to the UPF0161 family.

Its subcellular location is the cell inner membrane. Its function is as follows. Could be involved in insertion of integral membrane proteins into the membrane. This chain is Putative membrane protein insertion efficiency factor, found in Cereibacter sphaeroides (strain ATCC 17025 / ATH 2.4.3) (Rhodobacter sphaeroides).